The primary structure comprises 1183 residues: Peroxisomal ATPase PEX6 (1183 aa).

The interval 161–205 (ESRGKKTGEPEDGPLANGIDLNGVDDSDSDEDVLSQGDDDDENNV) is disordered. Over residues 183 to 204 (GVDDSDSDEDVLSQGDDDDENN) the composition is skewed to acidic residues. An AAA-cassette D1 region spans residues 576–785 (LPNNYISPVH…VERAMTACSE (210 aa)). The tract at residues 878 to 1070 (GILFYGPPGT…CSDAMLKAIT (193 aa)) is AAA-cassette D2. 883–890 (GPPGTGKT) serves as a coordination point for ATP. Positions 1160-1183 (IMVDGPGTGGEGAFGDDGDEEGLY) are disordered. Positions 1173-1183 (FGDDGDEEGLY) are enriched in acidic residues.

The protein belongs to the AAA ATPase family. In terms of assembly, interacts with PEX1; forming the PEX1-PEX6 AAA ATPase complex, which is composed of a heterohexamer formed by a trimer of PEX1-PEX6 dimers.

It localises to the cytoplasm. It is found in the cytosol. Its subcellular location is the peroxisome membrane. It carries out the reaction ATP + H2O = ADP + phosphate + H(+). Its function is as follows. Component of the PEX1-PEX6 AAA ATPase complex, a protein dislocase complex that mediates the ATP-dependent extraction of the PEX5 receptor from peroxisomal membranes, an essential step for PEX5 recycling. Specifically recognizes PEX5 monoubiquitinated at 'Cys-6', and pulls it out of the peroxisome lumen through the PEX2-PEX10-PEX12 retrotranslocation channel. Extraction by the PEX1-PEX6 AAA ATPase complex is accompanied by unfolding of the TPR repeats and release of bound cargo from PEX5. Regulates autophagy and biogenesis of peroxisomes and Woronin bodies. Plays important roles in mycelial growth and development and stress response. Is also essential for conidiation and fatty acid utilization. Required for nematode predation via trap formation. The protein is Peroxisomal ATPase PEX6 of Arthrobotrys oligospora (strain ATCC 24927 / CBS 115.81 / DSM 1491) (Nematode-trapping fungus).